Reading from the N-terminus, the 376-residue chain is Queuine tRNA-ribosyltransferase (376 aa).

Catalysis depends on aspartate 90, which acts as the Proton acceptor. Residues 90 to 94 (DSGGF), aspartate 144, glutamine 193, and glycine 220 each bind substrate. Positions 251–257 (GVGTPED) are RNA binding. Residue aspartate 270 is the Nucleophile of the active site. Residues 275 to 279 (TRNAR) form an RNA binding; important for wobble base 34 recognition region. 4 residues coordinate Zn(2+): cysteine 308, cysteine 310, cysteine 313, and histidine 339.

Belongs to the queuine tRNA-ribosyltransferase family. As to quaternary structure, homodimer. Within each dimer, one monomer is responsible for RNA recognition and catalysis, while the other monomer binds to the replacement base PreQ1. The cofactor is Zn(2+).

It catalyses the reaction 7-aminomethyl-7-carbaguanine + guanosine(34) in tRNA = 7-aminomethyl-7-carbaguanosine(34) in tRNA + guanine. The protein operates within tRNA modification; tRNA-queuosine biosynthesis. Functionally, catalyzes the base-exchange of a guanine (G) residue with the queuine precursor 7-aminomethyl-7-deazaguanine (PreQ1) at position 34 (anticodon wobble position) in tRNAs with GU(N) anticodons (tRNA-Asp, -Asn, -His and -Tyr). Catalysis occurs through a double-displacement mechanism. The nucleophile active site attacks the C1' of nucleotide 34 to detach the guanine base from the RNA, forming a covalent enzyme-RNA intermediate. The proton acceptor active site deprotonates the incoming PreQ1, allowing a nucleophilic attack on the C1' of the ribose to form the product. After dissociation, two additional enzymatic reactions on the tRNA convert PreQ1 to queuine (Q), resulting in the hypermodified nucleoside queuosine (7-(((4,5-cis-dihydroxy-2-cyclopenten-1-yl)amino)methyl)-7-deazaguanosine). This chain is Queuine tRNA-ribosyltransferase, found in Cupriavidus pinatubonensis (strain JMP 134 / LMG 1197) (Cupriavidus necator (strain JMP 134)).